The sequence spans 643 residues: Threonine--tRNA ligase (643 aa).

The TGS domain maps to methionine 1 to threonine 61. A catalytic region spans residues aspartate 243 to proline 534. Zn(2+) contacts are provided by cysteine 334, histidine 385, and histidine 511.

This sequence belongs to the class-II aminoacyl-tRNA synthetase family. Homodimer. It depends on Zn(2+) as a cofactor.

The protein resides in the cytoplasm. The catalysed reaction is tRNA(Thr) + L-threonine + ATP = L-threonyl-tRNA(Thr) + AMP + diphosphate + H(+). Functionally, catalyzes the attachment of threonine to tRNA(Thr) in a two-step reaction: L-threonine is first activated by ATP to form Thr-AMP and then transferred to the acceptor end of tRNA(Thr). Also edits incorrectly charged L-seryl-tRNA(Thr). This Actinobacillus pleuropneumoniae serotype 7 (strain AP76) protein is Threonine--tRNA ligase.